Consider the following 252-residue polypeptide: L-aspartate dehydrogenase (252 aa).

Residues Ala-119 and Asn-175 each contribute to the NAD(+) site. Residue His-203 is part of the active site.

The protein belongs to the L-aspartate dehydrogenase family.

The enzyme catalyses L-aspartate + NADP(+) + H2O = oxaloacetate + NH4(+) + NADPH + H(+). It carries out the reaction L-aspartate + NAD(+) + H2O = oxaloacetate + NH4(+) + NADH + H(+). It functions in the pathway cofactor biosynthesis; NAD(+) biosynthesis; iminoaspartate from L-aspartate (dehydrogenase route): step 1/1. Specifically catalyzes the NAD or NADP-dependent dehydrogenation of L-aspartate to iminoaspartate. The protein is L-aspartate dehydrogenase of Methanospirillum hungatei JF-1 (strain ATCC 27890 / DSM 864 / NBRC 100397 / JF-1).